A 581-amino-acid chain; its full sequence is Activating signal cointegrator 1 (581 aa).

A2 carries the N-acetylalanine modification. The tract at residues 100–121 is disordered; sequence DQLKRSRRKGRNKQEVPAFPEP. The C4-type zinc-finger motif lies at 167-219; it reads GRHPCDCLGQKHKLINNCLVCGRIVCEQEGSGPCLFCGSLVCTNEEQDILQRD. Residues 200–300 are mediates interaction with DDRGK1; that stretch reads CLFCGSLVCT…ASDSNQWLSK (101 aa). The residue at position 276 (S276) is a Phosphoserine. Y289 carries the post-translational modification Phosphotyrosine. A mediates interaction with UFL1 region spans residues 300 to 400; sequence KVEREMLQKR…WVDNTGSTPQ (101 aa). Glycyl lysine isopeptide (Lys-Gly) (interchain with G-Cter in UFM1) cross-links involve residues K324 and K334. Residues 390–406 show a composition bias toward polar residues; sequence QWVDNTGSTPQKKTSLS. Residues 390–410 form a disordered region; that stretch reads QWVDNTGSTPQKKTSLSAGPR. The 95-residue stretch at 437–531 folds into the ASCH domain; that stretch reads LSMHQPWASL…FQEQFPDISQ (95 aa).

Interacts with the thyroid hormone receptor/TR (via the ligand-binding domain); this interaction requires the presence of thyroid hormone. Interacts with the androgen receptor/AR; in an androgen, testosterone and dihydrotestosterone-dependent manner. Interacts with ESR1 (estrogen ligand-bound); competes with UFSP2. Interacts with UFSP2; competes with ligand-bound ESR1. Interacts with DDRGK1 and UFL1; the interaction with DDRGK1 is direct. Interacts with NCOA1. Interacts with EP300. Part of the ASC-1 complex, that contains TRIP4, ASCC1, ASCC2 and ASCC3. Identified in the RQT (ribosome quality control trigger) complex, that contains ASCC2, ASCC3 and TRIP4. Interacts with NEK6. Interacts with CSRP1. Interacts with ZCCHC4. Phosphorylated by NEK6. Post-translationally, polyufmylated by the UFM1-conjugating system composed of the enzymes UBA5, UFC1 and UFL1. Deufmylated by the protease UFSP2. Ufmylation of TRIP4 is promoted by ligand-bound nuclear receptors that compete with UFSP2 for interaction with TRIP4. Nuclear receptors-induced ufmylation promotes the recruitment of additional transcriptional coactivators like EP300 and NCOA1 and therefore the assembly of a coactivator complex facilitating nuclear receptor-mediated transcription. Ubiquitously expressed. Expressed in the spinal cord, brain, paraspinal ganglia, thyroid, and submandibular glands. Expressed at low level in all the muscles (at protein level) but with higher expression in axial than in limb muscles.

The protein resides in the nucleus. Its subcellular location is the cytoplasm. The protein localises to the cytosol. It is found in the cytoskeleton. It localises to the microtubule organizing center. The protein resides in the centrosome. Its function is as follows. Transcription coactivator which associates with nuclear receptors, transcriptional coactivators including EP300, CREBBP and NCOA1, and basal transcription factors like TBP and TFIIA to facilitate nuclear receptors-mediated transcription. May thereby play an important role in establishing distinct coactivator complexes under different cellular conditions. Plays a role in thyroid hormone receptor and estrogen receptor transactivation. Also involved in androgen receptor transactivation. Plays a pivotal role in the transactivation of NF-kappa-B, SRF and AP1. Acts as a mediator of transrepression between nuclear receptor and either AP1 or NF-kappa-B. May play a role in the development of neuromuscular junction. May play a role in late myogenic differentiation. Also functions as part of the RQC trigger (RQT) complex that activates the ribosome quality control (RQC) pathway, a pathway that degrades nascent peptide chains during problematic translation. The sequence is that of Activating signal cointegrator 1 from Mus musculus (Mouse).